A 414-amino-acid chain; its full sequence is Testis-specific Y-encoded-like protein 4 (414 aa).

Disordered stretches follow at residues 1–129 and 391–414; these read MSGL…AGQK and PRRGIRGPPRQPVESARSFRFQSG. Positions 24-40 are enriched in basic and acidic residues; that stretch reads ASGDPDRDQCQGLREET. Over residues 101 to 112 the composition is skewed to low complexity; that stretch reads EAASAAEAADSS.

The protein belongs to the nucleosome assembly protein (NAP) family.

This chain is Testis-specific Y-encoded-like protein 4 (TSPYL4), found in Homo sapiens (Human).